A 358-amino-acid chain; its full sequence is Peptide chain release factor 1 (358 aa).

The residue at position 235 (glutamine 235) is an N5-methylglutamine.

It belongs to the prokaryotic/mitochondrial release factor family. Post-translationally, methylated by PrmC. Methylation increases the termination efficiency of RF1.

It localises to the cytoplasm. Its function is as follows. Peptide chain release factor 1 directs the termination of translation in response to the peptide chain termination codons UAG and UAA. The chain is Peptide chain release factor 1 from Neisseria gonorrhoeae (strain ATCC 700825 / FA 1090).